Consider the following 130-residue polypeptide: Methylglyoxal synthase (130 aa).

In terms of domain architecture, MGS-like spans 1–130 (MSKPRIALIA…DLARTMQDVC (130 aa)). Substrate-binding positions include His11, Lys15, 37–40 (TGTT), and 57–58 (SG). The active-site Proton donor/acceptor is the Asp63. Substrate is bound at residue His90.

The protein belongs to the methylglyoxal synthase family.

The enzyme catalyses dihydroxyacetone phosphate = methylglyoxal + phosphate. In terms of biological role, catalyzes the formation of methylglyoxal from dihydroxyacetone phosphate. The polypeptide is Methylglyoxal synthase (Burkholderia multivorans (strain ATCC 17616 / 249)).